The primary structure comprises 525 residues: GMP synthase [glutamine-hydrolyzing] (525 aa).

The Glutamine amidotransferase type-1 domain maps to 9-207; sequence RILILDFGSQ…VSDICGCEKQ (199 aa). Cys-86 (nucleophile) is an active-site residue. Active-site residues include His-181 and Glu-183. Positions 208–400 constitute a GMPS ATP-PPase domain; the sequence is WTPAKIIDDA…LGLPYNMLYR (193 aa). Position 235–241 (235–241) interacts with ATP; the sequence is SGGVDSS.

As to quaternary structure, homodimer.

The catalysed reaction is XMP + L-glutamine + ATP + H2O = GMP + L-glutamate + AMP + diphosphate + 2 H(+). It participates in purine metabolism; GMP biosynthesis; GMP from XMP (L-Gln route): step 1/1. Functionally, catalyzes the synthesis of GMP from XMP. This Idiomarina loihiensis (strain ATCC BAA-735 / DSM 15497 / L2-TR) protein is GMP synthase [glutamine-hydrolyzing].